Consider the following 478-residue polypeptide: Flotillin-like protein 1 (478 aa).

A lipid anchor (S-palmitoyl cysteine) is attached at cysteine 35. Residues 235–277 are a coiled coil; it reads ENQREAEVAEANSELAKKKAAWTMAAQVAELEAAKAVALREAE.

It belongs to the band 7/mec-2 family. Flotillin subfamily. In terms of processing, may be palmitoylated. In terms of tissue distribution, expressed in all plant organs. Primarily expressed in vascular tissues. No change in spatial expression in root upon inoculation. Expression limited to the nodule vascular tissue.

The protein localises to the cell membrane. It is found in the membrane. The protein resides in the caveola. Functionally, may act as a scaffolding protein within caveolar membranes, functionally participating in formation of caveolae or caveolae-like vesicles. May be involved in nodule formation. This is Flotillin-like protein 1 (FLOT1) from Medicago truncatula (Barrel medic).